The primary structure comprises 804 residues: Probable cadmium-transporting ATPase (804 aa).

2 consecutive HMA domains span residues 11 to 74 (DKQV…LKVA) and 89 to 152 (DKNV…LKVI). Cd(2+)-binding residues include Cys22, Cys25, Cys100, and Cys103. The next 5 membrane-spanning stretches (helical) occupy residues 183 to 203 (STLL…FVNG), 207 to 227 (LVTS…LFKV), 248 to 268 (IGAA…LFAI), 413 to 433 (IIMV…GGSW), and 441 to 461 (LAVL…ISIV). Asp492 (4-aspartylphosphate intermediate) is an active-site residue. The next 2 membrane-spanning stretches (helical) occupy residues 749–771 (LNII…LLVI) and 776–798 (TLWI…SLRL).

The protein belongs to the cation transport ATPase (P-type) (TC 3.A.3) family. Type IB subfamily.

Its subcellular location is the cell membrane. It catalyses the reaction Cd(2+)(in) + ATP + H2O = Cd(2+)(out) + ADP + phosphate + H(+). Functionally, couples the hydrolysis of ATP with the export of cadmium. Involved in cadmium resistance. The protein is Probable cadmium-transporting ATPase (cadA) of Staphylococcus aureus.